A 280-amino-acid chain; its full sequence is Transcription factor HES-1 (280 aa).

The tract at residues 1–44 (MPADIMEKNSSSPVAATPASVNTTPDKPKTASEHRKSSKPIMEK) is disordered. Low complexity predominate over residues 10–21 (SSSPVAATPASV). The span at 26–35 (DKPKTASEHR) shows a compositional bias: basic and acidic residues. One can recognise a bHLH domain in the interval 34-91 (HRKSSKPIMEKRRRARINESLSQLKTLILDALKKDSSRHSKLEKADILEMTVKHLRNL). The region spanning 110–143 (YRAGFSECMNEVTRFLSTCEGVNTEVRTRLLGHL) is the Orange domain. 2 disordered regions span residues 157 to 200 (GQPH…PPGG) and 254 to 280 (TSVG…PWRN). Pro residues-rich tracts occupy residues 164 to 174 (QAPPPPPPGPG) and 181 to 200 (FAPP…PPGG). Residues 254-271 (TSVGPNAVSPSSGPSLTA) are compositionally biased toward polar residues. The WRPW motif motif lies at 275–278 (WRPW).

In terms of assembly, transcription repression requires formation of a complex with a corepressor protein of the Groucho/TLE family. Interacts with SIRT1. Interacts (via WPRW motif) with TLE1, and more weakly with TLE2. Interacts with HES6. Interacts with an FA complex, composed of FANCA, FANCF, FANCG and FANCL, but not of FANCC, nor FANCE.

It localises to the nucleus. Transcriptional repressor of genes that require a bHLH protein for their transcription. May act as a negative regulator of myogenesis by inhibiting the functions of MYOD1 and ASH1. Binds DNA on N-box motifs: 5'-CACNAG-3' with high affinity and on E-box motifs: 5'-CANNTG-3' with low affinity. May play a role in a functional FA core complex response to DNA cross-link damage, being required for the stability and nuclear localization of FA core complex proteins, as well as for FANCD2 monoubiquitination in response to DNA damage. This is Transcription factor HES-1 (HES1) from Bos taurus (Bovine).